The sequence spans 421 residues: ATP-dependent RNA helicase RhlB (421 aa).

A Q motif motif is present at residues Q9–A37. The Helicase ATP-binding domain occupies L40–I219. ATP is bound at residue A53–T60. The short motif at D165–D168 is the DEAD box element. In terms of domain architecture, Helicase C-terminal spans R245–M390. The tract at residues D392–G421 is disordered. A compositionally biased stretch (low complexity) spans P402–P414.

This sequence belongs to the DEAD box helicase family. RhlB subfamily. In terms of assembly, component of the RNA degradosome, which is a multiprotein complex involved in RNA processing and mRNA degradation.

It is found in the cytoplasm. It carries out the reaction ATP + H2O = ADP + phosphate + H(+). Functionally, DEAD-box RNA helicase involved in RNA degradation. Has RNA-dependent ATPase activity and unwinds double-stranded RNA. This Escherichia coli O157:H7 protein is ATP-dependent RNA helicase RhlB.